The following is a 473-amino-acid chain: Proline transporter 1 (473 aa).

Basic and acidic residues predominate over residues 1 to 11 (MDQHQLDEENQ). A disordered region spans residues 1–31 (MDQHQLDEENQRAALFHSSAPSSSLGADGEE). 11 helical membrane-spanning segments follow: residues 65 to 85 (PWYQ…VLGY), 88 to 108 (SIMV…AAAI), 145 to 165 (LTWA…IILA), 188 to 208 (IALS…LSAL), 210 to 230 (IWLG…FVMS), 252 to 272 (IFTT…GMLP), 290 to 310 (LWFQ…MGYW), 333 to 353 (VANL…ASPM), 378 to 398 (VGVR…LPFL), 401 to 421 (FMSL…ANHM), and 437 to 457 (WHWL…VAAV).

Belongs to the amino acid/polyamine transporter 2 family. Amino acid/auxin permease (AAAP) (TC 2.A.18.3) subfamily. In terms of tissue distribution, expressed in roots, leaf blades and sheaths, stems and young panicle.

It localises to the cell membrane. In terms of biological role, proline transporter that mediates proline transport across the plasma membrane when expressed in a heterologous system (Xenopus oocytes). In Oryza sativa subsp. japonica (Rice), this protein is Proline transporter 1 (PROT1).